Here is a 505-residue protein sequence, read N- to C-terminus: Deoxyguanosinetriphosphate triphosphohydrolase (505 aa).

The HD domain maps to R66–C273.

It belongs to the dGTPase family. Type 1 subfamily. In terms of assembly, homotetramer. The cofactor is Mg(2+).

The enzyme catalyses dGTP + H2O = 2'-deoxyguanosine + triphosphate + H(+). In terms of biological role, dGTPase preferentially hydrolyzes dGTP over the other canonical NTPs. This is Deoxyguanosinetriphosphate triphosphohydrolase from Salmonella schwarzengrund (strain CVM19633).